Reading from the N-terminus, the 553-residue chain is Aminotransferase FUM8 (553 aa).

The first 25 residues, methionine 1–glycine 25, serve as a signal peptide directing secretion. N-linked (GlcNAc...) asparagine glycosylation occurs at asparagine 480.

It belongs to the class-II pyridoxal-phosphate-dependent aminotransferase family. BioF subfamily. Pyridoxal 5'-phosphate serves as cofactor.

It is found in the endoplasmic reticulum. Its pathway is mycotoxin biosynthesis. In terms of biological role, aminotransferase; part of the gene cluster that mediates the biosynthesis of fumonisins B1 (FB1), B2 (FB2), B3 (FB3), and B4 (FB4), which are carcinogenic mycotoxins. Within the pathway, FUM8 catalyzes the release of the C-18 polyketide chain from the highly reducing polyketide synthase FUM1 by a nucleophilic attack of a carbanion, which is derived from R-carbon of alanine by decarboxylation, on the carbonyl carbon of polyketide acyl chain. The biosynthesis starts with the FUM1-catalyzed carbon chain assembly from one molecule of acetyl-CoA, eight molecules of malonyl-CoA, and two molecules of methionine (in S-adenosyl form). The C18 polyketide chain is released from the enzyme by a nucleophilic attack of a carbanion, which is derived from R-carbon of alanine by decarboxylation, on the carbonyl carbon of polyketide acyl chain. This step is catalyzed by the pyridoxal 5'-phosphate-dependent aminoacyl transferase FUM8. The resultant 3-keto intermediate is then stereospecifically reduced to a 3-hydroxyl product by reductase FUM13. Subsequent oxidations at C-10 by the cytochrome P450 monooxygenase FUM2, C-14 and C-15 by FUM6, FUM12 or FUM15, tricarballylic esterification of the hydroxyl groups on C-14 and C-15 by acyltransferase FUM14, and C-5 hydroxylation by 2-keto-glutarate-dependent dioxygenase FUM3 furnish the biosynthesis of fumonisins. The tricarballylic moieties are most likely derived from the citric acid cycle, and their addition to the carbon backbone may involve FUM7, FUM10, FUM11 and FUM14. This Gibberella moniliformis (strain M3125 / FGSC 7600) (Maize ear and stalk rot fungus) protein is Aminotransferase FUM8.